A 31-amino-acid polypeptide reads, in one-letter code: Nemertide alpha-7 (31 aa).

3 disulfides stabilise this stretch: cysteine 2/cysteine 16, cysteine 9/cysteine 20, and cysteine 15/cysteine 26. Proline 29 is subject to 4-hydroxyproline.

This sequence belongs to the nemertide family. In terms of tissue distribution, confined to the epidermis and to the mucus layer.

Its subcellular location is the secreted. In terms of biological role, potent toxin, demonstrating strong inhibitory effects on insect sodium channels (Nav) and reduced activity on mammalian sodium channels. Potently inhibits inactivation of insect sodium channels of B.germanica (BgNav1) (EC(50)=9.5 nM). The toxin also delays the inactivation of most mammalian Nav (human Nav1.1/SCN1A; EC(50)=171.5 nM, rat Nav1.2/SCN2A; EC(50)=50.4 nM, rat Nav1.3/SCN3A; EC(50)=170.2 nM, rat Nav1.4/SCN4A; EC(50)=810.6 nM, human Nav1.5/SCN5A; EC(50)=155.6 nM, mouse Nav1.6/SCN8A; EC(50)=147.6 nM, human Nav1.9/SCN9A; EC(50)=129 nM). Inactivation is completely prevented by a concentration of 1 uM, resulting in sustained, non-inactivating currents. In addition, the toxin significantly enhances the recovery from inactivation, and the open state is not required for the toxin to interact with the channel. In vivo, injection into brine shrimp (Artemia salina) stops movement or causes death after 24 hours (EC(50)=6.1 uM). This is Nemertide alpha-7 from Lineus ruber (Red bootlace).